The following is a 313-amino-acid chain: Carbamate kinase 2 (313 aa).

Belongs to the carbamate kinase family.

It is found in the cytoplasm. The enzyme catalyses hydrogencarbonate + NH4(+) + ATP = carbamoyl phosphate + ADP + H2O + H(+). It functions in the pathway metabolic intermediate metabolism; carbamoyl phosphate degradation; CO(2) and NH(3) from carbamoyl phosphate: step 1/1. This is Carbamate kinase 2 (arcC2) from Staphylococcus aureus (strain Mu50 / ATCC 700699).